The following is a 336-amino-acid chain: Fructose-1,6-bisphosphatase class 1 (336 aa).

Residues glutamate 92, aspartate 115, leucine 117, and aspartate 118 each contribute to the Mg(2+) site. Substrate contacts are provided by residues 118-121 (DGSS), asparagine 211, tyrosine 244, 262-264 (YLY), and lysine 274. Glutamate 280 serves as a coordination point for Mg(2+).

Belongs to the FBPase class 1 family. Homotetramer. Mg(2+) is required as a cofactor.

It localises to the cytoplasm. The catalysed reaction is beta-D-fructose 1,6-bisphosphate + H2O = beta-D-fructose 6-phosphate + phosphate. The protein operates within carbohydrate biosynthesis; gluconeogenesis. The chain is Fructose-1,6-bisphosphatase class 1 from Aliivibrio fischeri (strain MJ11) (Vibrio fischeri).